Reading from the N-terminus, the 518-residue chain is D-aminopeptidase (518 aa).

Catalysis depends on Ser62, which acts as the Nucleophile. Lys65 acts as the Proton donor/acceptor in catalysis. A disordered region spans residues 373 to 392 (FGTGPEKMDISGENEAQSSM). The interval 477–487 (QRSMDAPSPGE) is important for specificity. Asp481 provides a ligand contact to substrate.

It belongs to the peptidase S12 family. Homodimer.

It catalyses the reaction Release of an N-terminal D-amino acid from a peptide, Xaa-|-Yaa-, in which Xaa is preferably D-Ala, D-Ser or D-Thr. D-amino acid amides and methyl esters also are hydrolyzed, as is glycine amide.. Its activity is regulated as follows. Inhibited by beta-lactam compounds such as 6-aminopenicillic acid, 7-aminocephalosporanic acid, benzylpenicillin and ampicillin. Inhibited by p-chloromercuribenzoate. Its function is as follows. Hydrolyzes N-terminal residues in D-amino acid-containing peptides. The protein is D-aminopeptidase of Brucella melitensis biotype 1 (strain ATCC 23456 / CCUG 17765 / NCTC 10094 / 16M).